Here is an 892-residue protein sequence, read N- to C-terminus: Alanine--tRNA ligase (892 aa).

Zn(2+) contacts are provided by histidine 596, histidine 600, cysteine 700, and histidine 704.

It belongs to the class-II aminoacyl-tRNA synthetase family. It depends on Zn(2+) as a cofactor.

The protein resides in the cytoplasm. The enzyme catalyses tRNA(Ala) + L-alanine + ATP = L-alanyl-tRNA(Ala) + AMP + diphosphate. Catalyzes the attachment of alanine to tRNA(Ala) in a two-step reaction: alanine is first activated by ATP to form Ala-AMP and then transferred to the acceptor end of tRNA(Ala). Also edits incorrectly charged Ser-tRNA(Ala) and Gly-tRNA(Ala) via its editing domain. This Methanococcus maripaludis (strain C5 / ATCC BAA-1333) protein is Alanine--tRNA ligase.